We begin with the raw amino-acid sequence, 164 residues long: Lipoprotein signal peptidase (164 aa).

4 consecutive transmembrane segments (helical) span residues 6–26, 39–59, 65–85, and 88–108; these read LGVL…LWLL, VLPF…GWFS, GQIL…IWMA, and TTKL…GNAI. Active-site residues include Asp118 and Asp140. Residues 141–161 form a helical membrane-spanning segment; the sequence is VAIVVGVAALLYDSLIGLPAA.

Belongs to the peptidase A8 family.

The protein resides in the cell inner membrane. It carries out the reaction Release of signal peptides from bacterial membrane prolipoproteins. Hydrolyzes -Xaa-Yaa-Zaa-|-(S,diacylglyceryl)Cys-, in which Xaa is hydrophobic (preferably Leu), and Yaa (Ala or Ser) and Zaa (Gly or Ala) have small, neutral side chains.. The protein operates within protein modification; lipoprotein biosynthesis (signal peptide cleavage). Its function is as follows. This protein specifically catalyzes the removal of signal peptides from prolipoproteins. The chain is Lipoprotein signal peptidase from Rhodopseudomonas palustris (strain ATCC BAA-98 / CGA009).